Here is a 95-residue protein sequence, read N- to C-terminus: Lipolysis-activating peptide 1-beta chain (95 aa).

An N-terminal signal peptide occupies residues 1–22 (MISVQVIFIAFISIIAFSMVCG). One can recognise an LCN-type CS-alpha/beta domain in the interval 23–91 (GNVFPNRELG…FLNALEKQCP (69 aa)). Cystine bridges form between cysteine 37–cysteine 60, cysteine 45–cysteine 70, and cysteine 49–cysteine 72.

In terms of assembly, homodimer; disulfide-linked or monomer (edited version) or heterodimer of an alpha chain (AC P84810) and this beta chain (non-edited version). As to expression, expressed by the venom gland.

The protein resides in the secreted. In terms of biological role, the homodimer inhibits HMG-CoA reductase (HMGCR) (32% of inhibition produced by 0.6 uM), a glycoprotein involved in the control of cholesterol biosynthesis. The inhibitory effects of bumarsin are seen at much lower concentrations (0.6 uM) than that for statins such as atorvastatin (5 mM) and simvastatin (10 uM). In addition to inhibition of HMG-CoA reductase, this protein lowers cholesterol levels by inducing steroid hormone synthesis via StAR, and by increasing reverse cholesterol transport mediated by the induction of ABCA1 and APOA1. Functionally, the heterodimer non-edited LVP1 induces lipolysis in rat adipocytes. Induction of lipolysis by LVP1 appears to be mediated through the beta-2 adrenergic receptor pathway (ADRB2). Intracerebroventricular injection is not toxic to mice. Its function is as follows. The monomer edited version, similar to alpha-toxins, may modulate voltage-gated sodium channels (Nav) and may block voltage-gated potassium channels (Kv). The polypeptide is Lipolysis-activating peptide 1-beta chain (Buthus occitanus tunetanus (Common European scorpion)).